The sequence spans 250 residues: Shieldin complex subunit 3 (250 aa).

The segment at 28-83 is sufficient for interaction with MAD2L2; that stretch reads QDFPTRPLSRFIPWFPYDGSKLPLRPKRSPPVISEEAAEDVKQYLTISEHDAKSHS. Over residues 108–119 the composition is skewed to polar residues; the sequence is LKEQTNSGNLGK. The disordered stretch occupies residues 108-129; the sequence is LKEQTNSGNLGKQSEKGKQHKR.

As to quaternary structure, component of the shieldin complex, consisting of SHLD1, SHLD2, SHLD3 and MAD2L2/REV7. Within the complex, SHLD2 forms a scaffold which interacts with a SHLD3-MAD2L2 subcomplex via its N-terminus, and with SHLD1 via its C-terminus. Interacts with ASTE1.

It is found in the chromosome. In terms of biological role, component of the shieldin complex, which plays an important role in repair of DNA double-stranded breaks (DSBs). During G1 and S phase of the cell cycle, the complex functions downstream of TP53BP1 to promote non-homologous end joining (NHEJ) and suppress DNA end resection. Mediates various NHEJ-dependent processes including immunoglobulin class-switch recombination, and fusion of unprotected telomeres. The protein is Shieldin complex subunit 3 of Homo sapiens (Human).